The sequence spans 140 residues: HTH-type transcriptional regulator YfmP (140 aa).

The region spanning 1–73 (MEWMKIDQVA…LQELQHFMET (73 aa)) is the HTH merR-type domain. The H-T-H motif DNA-binding region spans 6-25 (IDQVAKRSGLTKRTIRFYEE).

Functionally, repressor of the yfmOP operon. A mutation in yfmP leads to overexpression of yfmO, probably causing a decrease in cellular copper that is eventually responsible for a reduced copper induction of copZA. The polypeptide is HTH-type transcriptional regulator YfmP (yfmP) (Bacillus subtilis (strain 168)).